A 279-amino-acid chain; its full sequence is Undecaprenyl-diphosphatase (279 aa).

A run of 8 helical transmembrane segments spans residues 2 to 22 (LFIE…TEWL), 44 to 64 (AFME…VIVI), 85 to 105 (WQLW…AVPL), 113 to 133 (FNHM…FLWI), 163 to 183 (VLSI…AIIL), 188 to 208 (TVAA…YSGL), 225 to 245 (LLVL…VIKL), and 255 to 275 (FTVF…YSVF).

Belongs to the UppP family.

It localises to the cell membrane. It carries out the reaction di-trans,octa-cis-undecaprenyl diphosphate + H2O = di-trans,octa-cis-undecaprenyl phosphate + phosphate + H(+). Its function is as follows. Catalyzes the dephosphorylation of undecaprenyl diphosphate (UPP). Confers resistance to bacitracin. This chain is Undecaprenyl-diphosphatase, found in Streptococcus equi subsp. zooepidemicus (strain H70).